The sequence spans 508 residues: ATP synthase subunit alpha, chloroplastic (508 aa).

170–177 (GDRQTGKT) lines the ATP pocket.

It belongs to the ATPase alpha/beta chains family. F-type ATPases have 2 components, F(1) - the catalytic core - and F(0) - the membrane proton channel. F(1) has five subunits: alpha(3), beta(3), gamma(1), delta(1), epsilon(1). F(0) has four main subunits: a(1), b(1), b'(1) and c(10-14). The alpha and beta chains form an alternating ring which encloses part of the gamma chain. F(1) is attached to F(0) by a central stalk formed by the gamma and epsilon chains, while a peripheral stalk is formed by the delta, b and b' chains.

The protein localises to the plastid. It is found in the chloroplast thylakoid membrane. The catalysed reaction is ATP + H2O + 4 H(+)(in) = ADP + phosphate + 5 H(+)(out). Its function is as follows. F(1)F(0) ATP synthase produces ATP from ADP in the presence of a proton or sodium gradient. F-type ATPases consist of two structural domains, F(1) containing the extramembraneous catalytic core and F(0) containing the membrane proton channel, linked together by a central stalk and a peripheral stalk. During catalysis, ATP synthesis in the catalytic domain of F(1) is coupled via a rotary mechanism of the central stalk subunits to proton translocation. In terms of biological role, the alpha chain is a regulatory subunit. The polypeptide is ATP synthase subunit alpha, chloroplastic (Chlamydomonas reinhardtii (Chlamydomonas smithii)).